Consider the following 457-residue polypeptide: tRNA modification GTPase MnmE (457 aa).

Arg-23, Glu-85, and Arg-124 together coordinate (6S)-5-formyl-5,6,7,8-tetrahydrofolate. Positions 220 to 376 constitute a TrmE-type G domain; sequence GALVVLAGQV…LVTAIRAAVL (157 aa). Asn-230 is a binding site for K(+). GTP is bound by residues 230-235, 249-255, and 274-277; these read NAGKSS, TDLPGTT, and DTAG. Mg(2+) is bound at residue Ser-234. 3 residues coordinate K(+): Thr-249, Leu-251, and Thr-254. Thr-255 serves as a coordination point for Mg(2+). A (6S)-5-formyl-5,6,7,8-tetrahydrofolate-binding site is contributed by Lys-457.

Belongs to the TRAFAC class TrmE-Era-EngA-EngB-Septin-like GTPase superfamily. TrmE GTPase family. In terms of assembly, homodimer. Heterotetramer of two MnmE and two MnmG subunits. It depends on K(+) as a cofactor.

It is found in the cytoplasm. Exhibits a very high intrinsic GTPase hydrolysis rate. Involved in the addition of a carboxymethylaminomethyl (cmnm) group at the wobble position (U34) of certain tRNAs, forming tRNA-cmnm(5)s(2)U34. The polypeptide is tRNA modification GTPase MnmE (Nitratidesulfovibrio vulgaris (strain DP4) (Desulfovibrio vulgaris)).